The primary structure comprises 556 residues: M-phase inducer phosphatase (556 aa).

Disordered stretches follow at residues 165-186 (STDGLVPDSPTVLPKDGKQERR) and 257-297 (TSGL…RPRK). Basic residues predominate over residues 287–297 (KSAHPNMRPRK). Residues 371–474 (MFDNIMIIDC…FFAEHRSLCY (104 aa)) enclose the Rhodanese domain. Cysteine 421 is an active-site residue. The span at 505–516 (RAQTFAFGQQSP) shows a compositional bias: polar residues. Residues 505 to 556 (RAQTFAFGQQSPEMEDSPTGRCRNNPGDRKLLASPFNDSPGSRFPGRRMLSY) are disordered.

Belongs to the MPI phosphatase family.

It carries out the reaction O-phospho-L-tyrosyl-[protein] + H2O = L-tyrosyl-[protein] + phosphate. Its function is as follows. This protein functions as a dosage-dependent inducer in mitotic control. It is a tyrosine protein phosphatase required for progression of the cell cycle. It may directly dephosphorylate p34(cdc2) and activate the p34(cdc2) kinase activity. The polypeptide is M-phase inducer phosphatase (nimT) (Emericella nidulans (strain FGSC A4 / ATCC 38163 / CBS 112.46 / NRRL 194 / M139) (Aspergillus nidulans)).